A 421-amino-acid polypeptide reads, in one-letter code: DUF724 domain-containing protein 8 (421 aa).

Polar residues-rich tracts occupy residues 149 to 165 and 199 to 213; these read TQGS…NANE and PRNQ…TLEN. The disordered stretch occupies residues 149–229; it reads TQGSGDKTGD…NRKRKREENL (81 aa). The DUF724 domain occupies 246–420; it reads VLPFEKKLRI…LEFLATASAP (175 aa). Residues 361-397 adopt a coiled-coil conformation; the sequence is EKVTAEKESVKAENKRKILELQRLNEEMDKEIAQSKS.

Expressed in leaves and flowers, and at lower levels in roots, stems and siliques.

The protein localises to the nucleus. In terms of biological role, may be involved in the polar growth of plant cells via transportation of RNAs. This chain is DUF724 domain-containing protein 8, found in Arabidopsis thaliana (Mouse-ear cress).